Reading from the N-terminus, the 317-residue chain is Anamorsin homolog 2 (317 aa).

An N-terminal SAM-like domain region spans residues 1-162; sequence MAKKVGVLLF…KPSWDSASVF (162 aa). The linker stretch occupies residues 163–229; it reads QLRKGSSQKG…EDDLLTEEDL (67 aa). [2Fe-2S] cluster is bound by residues Cys240, Cys247, Cys250, and Cys252. The tract at residues 240 to 252 is fe-S binding site A; sequence CAPTKKACKNCTC. Cys278, Cys281, Cys289, and Cys292 together coordinate [4Fe-4S] cluster. 2 short sequence motifs (cx2C motif) span residues 278–281 and 289–292; these read CGSC and CAGC. The segment at 278-292 is fe-S binding site B; it reads CGSCGLGDAFRCAGC.

It belongs to the anamorsin family. As to quaternary structure, monomer. [2Fe-2S] cluster is required as a cofactor. It depends on [4Fe-4S] cluster as a cofactor.

It localises to the cytoplasm. The protein resides in the mitochondrion intermembrane space. Functionally, component of the cytosolic iron-sulfur (Fe-S) protein assembly (CIA) machinery. Required for the maturation of extramitochondrial Fe-S proteins. Part of an electron transfer chain functioning in an early step of cytosolic Fe-S biogenesis, facilitating the de novo assembly of a [4Fe-4S] cluster on the cytosolic Fe-S scaffold complex. Electrons are transferred from NADPH via a FAD- and FMN-containing diflavin oxidoreductase. Together with the diflavin oxidoreductase, also required for the assembly of the diferric tyrosyl radical cofactor of ribonucleotide reductase (RNR), probably by providing electrons for reduction during radical cofactor maturation in the catalytic small subunit. This is Anamorsin homolog 2 from Physcomitrium patens (Spreading-leaved earth moss).